The primary structure comprises 637 residues: Biosynthetic arginine decarboxylase (637 aa).

K101 carries the post-translational modification N6-(pyridoxal phosphate)lysine. 286 to 296 contributes to the substrate binding site; sequence FDVGGGLAVDY.

It belongs to the Orn/Lys/Arg decarboxylase class-II family. SpeA subfamily. Mg(2+) serves as cofactor. Requires pyridoxal 5'-phosphate as cofactor.

It carries out the reaction L-arginine + H(+) = agmatine + CO2. Its pathway is amine and polyamine biosynthesis; agmatine biosynthesis; agmatine from L-arginine: step 1/1. Its function is as follows. Catalyzes the biosynthesis of agmatine from arginine. This chain is Biosynthetic arginine decarboxylase, found in Shewanella halifaxensis (strain HAW-EB4).